A 500-amino-acid polypeptide reads, in one-letter code: ERAD-associated E3 ubiquitin-protein ligase HRD1 (500 aa).

Topologically, residues 1–3 (MIR) are cytoplasmic. A helical transmembrane segment spans residues 4-24 (LQTYAAFSLMATATAVYYAFS). The Lumenal portion of the chain corresponds to 25–40 (SREQFYPAMVYLSTSK). The helical transmembrane segment at 41-61 (ICFVLLLNTGLVAMCVAWQLV) threads the bilayer. Topologically, residues 62–98 (KRLFLGTLREAEVERLNEQAWREVVEILFAVTIFRQD) are cytoplasmic. A helical membrane pass occupies residues 99-119 (FSVSFLAMVAALLLVKALHWL). At 120 to 135 (AQKRVEYIETTPSVPM) the chain is on the lumenal side. Residues 136 to 156 (LSHARIVSFMLFLLVVDCLFL) form a helical membrane-spanning segment. The Cytoplasmic segment spans residues 157 to 170 (SNSLRSLIHKREAS). Residues 171–191 (VAIFFSFEYMILATSTVSTFV) form a helical membrane-spanning segment. Residues 192 to 225 (KYIFYVSDMLMEGQWEKKAVYTFYLELISDLVHL) lie on the Lumenal side of the membrane. A helical membrane pass occupies residues 226 to 246 (SLYMLFFIAIFLNYGVPLHLI). Topologically, residues 247–500 (RELYETFRNF…NENGEHTKSD (254 aa)) are cytoplasmic. The RING-type; atypical zinc-finger motif lies at 292 to 330 (CIICREEMTTAKKLLCGHLFHVHCLRSWLERQHTCPTCR). Disordered regions lie at residues 337–375 (DNGR…SRRQ) and 398–438 (NNLN…SAPT). The segment covering 348-358 (VHPGVQPVPGN) has biased composition (low complexity). The span at 398–426 (NNLNRYSTPPQSTSNGPQSGEASTSNQSP) shows a compositional bias: polar residues.

The protein belongs to the HRD1 family.

Its subcellular location is the endoplasmic reticulum membrane. It carries out the reaction S-ubiquitinyl-[E2 ubiquitin-conjugating enzyme]-L-cysteine + [acceptor protein]-L-lysine = [E2 ubiquitin-conjugating enzyme]-L-cysteine + N(6)-ubiquitinyl-[acceptor protein]-L-lysine.. Its pathway is protein modification; protein ubiquitination. In terms of biological role, probable component of the HRD1 ubiquitin ligase complex that mediates the rapid degradation of misfolded endoplasmic reticulum (ER) proteins, a process called ER-associated degradation (ERAD). This chain is ERAD-associated E3 ubiquitin-protein ligase HRD1, found in Oryza sativa subsp. japonica (Rice).